A 311-amino-acid polypeptide reads, in one-letter code: Coproporphyrin III ferrochelatase 1 (311 aa).

Fe-coproporphyrin III is bound by residues tyrosine 12, arginine 29, 45–46 (RY), serine 53, and tyrosine 124. Fe(2+) is bound by residues histidine 182 and glutamate 263.

This sequence belongs to the ferrochelatase family.

It is found in the cytoplasm. It carries out the reaction Fe-coproporphyrin III + 2 H(+) = coproporphyrin III + Fe(2+). The protein operates within porphyrin-containing compound metabolism; protoheme biosynthesis. In terms of biological role, involved in coproporphyrin-dependent heme b biosynthesis. Catalyzes the insertion of ferrous iron into coproporphyrin III to form Fe-coproporphyrin III. In Bacillus cereus (strain ZK / E33L), this protein is Coproporphyrin III ferrochelatase 1.